Here is a 94-residue protein sequence, read N- to C-terminus: Small ribosomal subunit protein uS19c (94 aa).

Belongs to the universal ribosomal protein uS19 family.

The protein resides in the plastid. Its subcellular location is the chloroplast. In terms of biological role, protein S19 forms a complex with S13 that binds strongly to the 16S ribosomal RNA. The chain is Small ribosomal subunit protein uS19c (rps19) from Euglena gracilis.